Consider the following 334-residue polypeptide: Galactosylgalactosylxylosylprotein 3-beta-glucuronosyltransferase 1 (334 aa).

The Cytoplasmic segment spans residues 1–6 (MPKRRD). An essential for transport from endoplasmic reticulum to Golgi apparatus and interaction with SAR1A region spans residues 3-5 (KRR). Residues 7-27 (ILAIVLIVLPWTLLITVWHQS) traverse the membrane as a helical; Signal-anchor for type II membrane protein segment. The Lumenal segment spans residues 28 to 334 (TLAPLLAVHK…KGFTDPSVEI (307 aa)). Residues 37 to 56 (KDEGSDPRRETPPGADPREY) are disordered. 91-93 (PTY) is a UDP-alpha-D-glucuronate binding site. Phosphothreonine is present on residues T103 and T108. D122 serves as a coordination point for UDP-alpha-D-glucuronate. N140 carries N-linked (GlcNAc...) asparagine glycosylation. Positions 165 and 170 each coordinate UDP-alpha-D-glucuronate. N-linked (GlcNAc...) asparagine glycosylation is present at N184. 195-197 (DDD) lines the UDP-alpha-D-glucuronate pocket. D197 contacts Mn(2+). The segment at 245–254 (FDPHRPFAID) is interaction with galactose moiety of substrate glycoprotein. E284 acts as the Proton donor/acceptor in catalysis. N303 carries N-linked (GlcNAc...) asparagine glycosylation. 311–313 (HTR) contacts UDP-alpha-D-glucuronate.

Belongs to the glycosyltransferase 43 family. Homodimer. Interacts with SAR1A. Mn(2+) is required as a cofactor. Post-translationally, the soluble form derives from the membrane form by proteolytic processing. As to expression, mainly expressed in the brain.

It is found in the golgi apparatus membrane. Its subcellular location is the secreted. The protein localises to the endoplasmic reticulum membrane. It catalyses the reaction 3-O-(beta-D-galactosyl-(1-&gt;3)-beta-D-galactosyl-(1-&gt;4)-beta-D-xylosyl)-L-seryl-[protein] + UDP-alpha-D-glucuronate = 3-O-(beta-D-GlcA-(1-&gt;3)-beta-D-Gal-(1-&gt;3)-beta-D-Gal-(1-&gt;4)-beta-D-Xyl)-L-seryl-[protein] + UDP + H(+). It functions in the pathway protein modification; protein glycosylation. Involved in the biosynthesis of L2/HNK-1 carbohydrate epitope on glycoproteins. Can also play a role in glycosaminoglycan biosynthesis. Substrates include asialo-orosomucoid (ASOR), asialo-fetuin, and asialo-neural cell adhesion molecule. Requires sphingomyelin for activity: stearoyl-sphingomyelin was the most effective, followed by palmitoyl-sphingomyelin and lignoceroyl-sphingomyelin. Activity was demonstrated only for sphingomyelin with a saturated fatty acid and not for that with an unsaturated fatty acid, regardless of the length of the acyl group. The chain is Galactosylgalactosylxylosylprotein 3-beta-glucuronosyltransferase 1 from Homo sapiens (Human).